The following is a 285-amino-acid chain: Bifunctional protein FolD (285 aa).

NADP(+) is bound by residues glycine 166–serine 168 and isoleucine 232.

This sequence belongs to the tetrahydrofolate dehydrogenase/cyclohydrolase family. Homodimer.

The catalysed reaction is (6R)-5,10-methylene-5,6,7,8-tetrahydrofolate + NADP(+) = (6R)-5,10-methenyltetrahydrofolate + NADPH. It carries out the reaction (6R)-5,10-methenyltetrahydrofolate + H2O = (6R)-10-formyltetrahydrofolate + H(+). It participates in one-carbon metabolism; tetrahydrofolate interconversion. Functionally, catalyzes the oxidation of 5,10-methylenetetrahydrofolate to 5,10-methenyltetrahydrofolate and then the hydrolysis of 5,10-methenyltetrahydrofolate to 10-formyltetrahydrofolate. This chain is Bifunctional protein FolD, found in Baumannia cicadellinicola subsp. Homalodisca coagulata.